Reading from the N-terminus, the 406-residue chain is Cysteine desulfurase (406 aa).

At K226 the chain carries N6-(pyridoxal phosphate)lysine. C364 functions as the Cysteine persulfide intermediate in the catalytic mechanism.

This sequence belongs to the class-V pyridoxal-phosphate-dependent aminotransferase family. Csd subfamily. Homodimer. Interacts with SufE and the SufBCD complex composed of SufB, SufC and SufD. The interaction with SufE is required to mediate the direct transfer of the sulfur atom from the S-sulfanylcysteine. Requires pyridoxal 5'-phosphate as cofactor.

It localises to the cytoplasm. It carries out the reaction (sulfur carrier)-H + L-cysteine = (sulfur carrier)-SH + L-alanine. The catalysed reaction is L-selenocysteine + AH2 = hydrogenselenide + L-alanine + A + H(+). Its pathway is cofactor biosynthesis; iron-sulfur cluster biosynthesis. Functionally, cysteine desulfurases mobilize the sulfur from L-cysteine to yield L-alanine, an essential step in sulfur metabolism for biosynthesis of a variety of sulfur-containing biomolecules. Component of the suf operon, which is activated and required under specific conditions such as oxidative stress and iron limitation. Acts as a potent selenocysteine lyase in vitro, that mobilizes selenium from L-selenocysteine. Selenocysteine lyase activity is however unsure in vivo. This is Cysteine desulfurase from Escherichia coli O157:H7 (strain EC4115 / EHEC).